Here is a 573-residue protein sequence, read N- to C-terminus: 2-isopropylmalate synthase (573 aa).

One can recognise a Pyruvate carboxyltransferase domain in the interval 37–314 (PRWLSTDLRD…DPQIDFSNID (278 aa)). Mg(2+) is bound by residues aspartate 46, histidine 253, histidine 255, and asparagine 289. Positions 456–573 (NPRNPWGRIQ…VVSAVNRAAR (118 aa)) are regulatory domain.

This sequence belongs to the alpha-IPM synthase/homocitrate synthase family. LeuA type 2 subfamily. In terms of assembly, homodimer. Requires Mg(2+) as cofactor.

It localises to the cytoplasm. It carries out the reaction 3-methyl-2-oxobutanoate + acetyl-CoA + H2O = (2S)-2-isopropylmalate + CoA + H(+). It participates in amino-acid biosynthesis; L-leucine biosynthesis; L-leucine from 3-methyl-2-oxobutanoate: step 1/4. In terms of biological role, catalyzes the condensation of the acetyl group of acetyl-CoA with 3-methyl-2-oxobutanoate (2-ketoisovalerate) to form 3-carboxy-3-hydroxy-4-methylpentanoate (2-isopropylmalate). The chain is 2-isopropylmalate synthase from Streptomyces avermitilis (strain ATCC 31267 / DSM 46492 / JCM 5070 / NBRC 14893 / NCIMB 12804 / NRRL 8165 / MA-4680).